A 287-amino-acid chain; its full sequence is Genetic interactor of prohibitin 7, mitochondrial (287 aa).

The transit peptide at 1 to 24 (MVLSNVKIFRLKSHRAFRIGPMIK) directs the protein to the mitochondrion. The chain crosses the membrane as a helical span at residues 250-266 (SKAIISFVVFVSIYVWL).

Belongs to the GEP7 family.

The protein resides in the mitochondrion membrane. In terms of biological role, involved in respiratory growth and required for cell survival in the absence of prohibitins or GEM1. The polypeptide is Genetic interactor of prohibitin 7, mitochondrial (GEP7) (Saccharomyces cerevisiae (strain ATCC 204508 / S288c) (Baker's yeast)).